The following is a 133-amino-acid chain: Profilin (133 aa).

Belongs to the profilin family. Occurs in many kinds of cells as a complex with monomeric actin in a 1:1 ratio.

It localises to the cytoplasm. The protein localises to the cytoskeleton. Binds to actin and affects the structure of the cytoskeleton. At high concentrations, profilin prevents the polymerization of actin, whereas it enhances it at low concentrations. By binding to PIP2, it inhibits the formation of IP3 and DG. This Mercurialis annua (Annual mercury) protein is Profilin.